A 694-amino-acid polypeptide reads, in one-letter code: Soluble starch synthase 2-2, chloroplastic/amyloplastic (694 aa).

The transit peptide at 1-15 (MSGAIASSPAATLFL) directs the protein to the chloroplast. The segment at 93 to 197 (KADHVEDSVS…DSENKESGPL (105 aa)) is disordered. The span at 127–142 (APVSKPKVDPSVPASK) shows a compositional bias: low complexity. Residues 156 to 176 (AALDKKEDVGVAEPLEAKADA) are compositionally biased toward basic and acidic residues. Residues 177–186 (GGDAGAVSSA) are compositionally biased toward low complexity. Lysine 217 lines the ADP-alpha-D-glucose pocket.

Belongs to the glycosyltransferase 1 family. Bacterial/plant glycogen synthase subfamily. Expressed in leaves and weakly in endosperm and roots.

The protein resides in the plastid. It localises to the amyloplast. It is found in the chloroplast. It carries out the reaction [(1-&gt;4)-alpha-D-glucosyl](n) + ADP-alpha-D-glucose = [(1-&gt;4)-alpha-D-glucosyl](n+1) + ADP + H(+). Its pathway is glycan biosynthesis; starch biosynthesis. Functionally, may contribute to the deposition of transient starch in chloroplasts of leaves. The sequence is that of Soluble starch synthase 2-2, chloroplastic/amyloplastic (SSII-2) from Oryza sativa subsp. japonica (Rice).